We begin with the raw amino-acid sequence, 178 residues long: Large ribosomal subunit protein uL6 (178 aa).

This sequence belongs to the universal ribosomal protein uL6 family. As to quaternary structure, part of the 50S ribosomal subunit.

Its function is as follows. This protein binds to the 23S rRNA, and is important in its secondary structure. It is located near the subunit interface in the base of the L7/L12 stalk, and near the tRNA binding site of the peptidyltransferase center. The protein is Large ribosomal subunit protein uL6 of Leuconostoc mesenteroides subsp. mesenteroides (strain ATCC 8293 / DSM 20343 / BCRC 11652 / CCM 1803 / JCM 6124 / NCDO 523 / NBRC 100496 / NCIMB 8023 / NCTC 12954 / NRRL B-1118 / 37Y).